Here is a 106-residue protein sequence, read N- to C-terminus: Putative defensin-like protein 224 (106 aa).

Residues M1–A23 form the signal peptide. 3 cysteine pairs are disulfide-bonded: C60–C78, C64–C84, and C68–C86.

Belongs to the DEFL family.

Its subcellular location is the secreted. The polypeptide is Putative defensin-like protein 224 (Arabidopsis thaliana (Mouse-ear cress)).